The primary structure comprises 1061 residues: Isoleucine--tRNA ligase (1061 aa).

The short motif at 50–60 (PYTSGSAHMGT) is the 'HIGH' region element. A 'KMSKS' region motif is present at residues 604–608 (KMSKS). Lys-607 serves as a coordination point for ATP.

This sequence belongs to the class-I aminoacyl-tRNA synthetase family. IleS type 2 subfamily. As to quaternary structure, monomer. The cofactor is Zn(2+).

It is found in the cytoplasm. The enzyme catalyses tRNA(Ile) + L-isoleucine + ATP = L-isoleucyl-tRNA(Ile) + AMP + diphosphate. Catalyzes the attachment of isoleucine to tRNA(Ile). As IleRS can inadvertently accommodate and process structurally similar amino acids such as valine, to avoid such errors it has two additional distinct tRNA(Ile)-dependent editing activities. One activity is designated as 'pretransfer' editing and involves the hydrolysis of activated Val-AMP. The other activity is designated 'posttransfer' editing and involves deacylation of mischarged Val-tRNA(Ile). This chain is Isoleucine--tRNA ligase, found in Natronomonas pharaonis (strain ATCC 35678 / DSM 2160 / CIP 103997 / JCM 8858 / NBRC 14720 / NCIMB 2260 / Gabara) (Halobacterium pharaonis).